The chain runs to 264 residues: Spermidine/putrescine transport system permease protein PotC (264 aa).

Helical transmembrane passes span 10 to 30 (FMTA…VNSF), 66 to 86 (MAVF…VALY), 109 to 129 (IVMA…LGFW), 131 to 151 (LLFS…YSRL), 176 to 196 (IILP…FTLS), and 232 to 252 (ALAT…QLIA). One can recognise an ABC transmembrane type-1 domain in the interval 60 to 248 (AQHSLTMAVF…VLSLVMVIAS (189 aa)).

It belongs to the binding-protein-dependent transport system permease family. CysTW subfamily.

It localises to the cell inner membrane. Functionally, required for the activity of the bacterial periplasmic transport system of putrescine and spermidine. This chain is Spermidine/putrescine transport system permease protein PotC (potC), found in Shigella flexneri.